The sequence spans 74 residues: MKKQKSIDKHQLKDGLQSDIKAKLMEMKSQLKEEDEKRQKREKAEQIRKKKEIEKNKSFEELLNESQMDWHQYK.

2 stretches are compositionally biased toward basic and acidic residues: residues 1-13 (MKKQKSIDKHQLK) and 20-60 (IKAK…KSFE). The segment at 1–74 (MKKQKSIDKH…ESQMDWHQYK (74 aa)) is disordered. Residues 64–74 (NESQMDWHQYK) show a composition bias toward polar residues.

This is an uncharacterized protein from Bacillus subtilis (strain 168).